The chain runs to 185 residues: ATP synthase subunit b, chloroplastic (185 aa).

A helical transmembrane segment spans residues 27-49 (LATNPINLSVVLGVLVFFGKGVL).

This sequence belongs to the ATPase B chain family. As to quaternary structure, F-type ATPases have 2 components, F(1) - the catalytic core - and F(0) - the membrane proton channel. F(1) has five subunits: alpha(3), beta(3), gamma(1), delta(1), epsilon(1). F(0) has four main subunits: a(1), b(1), b'(1) and c(10-14). The alpha and beta chains form an alternating ring which encloses part of the gamma chain. F(1) is attached to F(0) by a central stalk formed by the gamma and epsilon chains, while a peripheral stalk is formed by the delta, b and b' chains.

The protein localises to the plastid. It is found in the chloroplast thylakoid membrane. In terms of biological role, f(1)F(0) ATP synthase produces ATP from ADP in the presence of a proton or sodium gradient. F-type ATPases consist of two structural domains, F(1) containing the extramembraneous catalytic core and F(0) containing the membrane proton channel, linked together by a central stalk and a peripheral stalk. During catalysis, ATP synthesis in the catalytic domain of F(1) is coupled via a rotary mechanism of the central stalk subunits to proton translocation. Component of the F(0) channel, it forms part of the peripheral stalk, linking F(1) to F(0). The chain is ATP synthase subunit b, chloroplastic from Glycine max (Soybean).